The primary structure comprises 411 residues: MNKELLNCERVWLNVTPATLRSDLADYGLLEPHALGVHEGRIHALVPMQDLKGPYPAHWQDMKGKLVTPGLIDCHTHLIFAGSRAEEFELRQKGVPYAEIARKGGGIISTVRATRAACEEQLFELALPRVKSLIREGVTTVEIKSGYGLTLEDELKMLRVARRLGEALPIRVKTTLLAAHAVPPEYRDDPDSWVETICQEIIPAAAEAGLADAVDVFCEHIGFSLAQTEQVYLAADQYGLAVKGHMDQLSNLGGSTLAANFGALSVDHLEYLDPEGIQALAHRGVVATLLPTAFYFLKETKLPPVAALRKAGVPMAVSSDINPGTAPIVSLRMAMNMACTLFGLTPVEAMAGVTRHAARALGEQEQLGQLRVGMLADFLVWNCGHPAELSYLIGVDQLVSRVINGEETLHG.

Fe(3+) contacts are provided by His75 and His77. Zn(2+) is bound by residues His75 and His77. Arg84, Tyr147, and His180 together coordinate 4-imidazolone-5-propanoate. Tyr147 serves as a coordination point for N-formimidoyl-L-glutamate. Residue His245 participates in Fe(3+) binding. Position 245 (His245) interacts with Zn(2+). Gln248 lines the 4-imidazolone-5-propanoate pocket. Asp320 contributes to the Fe(3+) binding site. Asp320 lines the Zn(2+) pocket. Positions 322 and 324 each coordinate N-formimidoyl-L-glutamate. 4-imidazolone-5-propanoate is bound at residue Thr325.

It belongs to the metallo-dependent hydrolases superfamily. HutI family. It depends on Zn(2+) as a cofactor. Requires Fe(3+) as cofactor.

It localises to the cytoplasm. The enzyme catalyses 4-imidazolone-5-propanoate + H2O = N-formimidoyl-L-glutamate. It functions in the pathway amino-acid degradation; L-histidine degradation into L-glutamate; N-formimidoyl-L-glutamate from L-histidine: step 3/3. Functionally, catalyzes the hydrolytic cleavage of the carbon-nitrogen bond in imidazolone-5-propanoate to yield N-formimidoyl-L-glutamate. It is the third step in the universal histidine degradation pathway. The chain is Imidazolonepropionase from Aeromonas hydrophila subsp. hydrophila (strain ATCC 7966 / DSM 30187 / BCRC 13018 / CCUG 14551 / JCM 1027 / KCTC 2358 / NCIMB 9240 / NCTC 8049).